We begin with the raw amino-acid sequence, 199 residues long: NAD(P)H dehydrogenase (quinone) (199 aa).

Positions 4–190 (VLVLYYSSWG…DGARFQGRHV (187 aa)) constitute a Flavodoxin-like domain. Residues 10 to 15 (SSWGHV) and 78 to 80 (TRY) contribute to the FMN site. W12 contributes to the NAD(+) binding site. W98 lines the substrate pocket. FMN-binding positions include 113–119 (STASQHG) and H134.

It belongs to the WrbA family. The cofactor is FMN.

The catalysed reaction is a quinone + NADH + H(+) = a quinol + NAD(+). It carries out the reaction a quinone + NADPH + H(+) = a quinol + NADP(+). The polypeptide is NAD(P)H dehydrogenase (quinone) (Methylorubrum extorquens (strain CM4 / NCIMB 13688) (Methylobacterium extorquens)).